We begin with the raw amino-acid sequence, 79 residues long: Calcium/calmodulin-dependent protein kinase II inhibitor 2 (79 aa).

A disordered region spans residues 1–21 (MSEILPYGEDKMGRFGADPEG). The inhibitory domain stretch occupies residues 43-69 (KRPPKLGQIGRAKRVVIEDDRIDDVLK).

This sequence belongs to the CAMK2N family. Interacts with CAMK2A and CAMK2B in the presence of Ca(2+)/calmodulin or after autophosphorylation.

Its subcellular location is the nucleus. The protein resides in the cytoplasm. It localises to the cytosol. It is found in the synapse. Functionally, potent and specific cellular inhibitor of CaM-kinase II (CAMK2). Traps Ca(2+)/calmodulin on CAMK2. The polypeptide is Calcium/calmodulin-dependent protein kinase II inhibitor 2 (Camk2n2) (Mus musculus (Mouse)).